Reading from the N-terminus, the 162-residue chain is Cyclic pyranopterin monophosphate synthase (162 aa).

Residues 79-81 and 117-118 each bind substrate; these read LCH and ME. Asp-132 is a catalytic residue.

It belongs to the MoaC family. In terms of assembly, homohexamer; trimer of dimers.

It catalyses the reaction (8S)-3',8-cyclo-7,8-dihydroguanosine 5'-triphosphate = cyclic pyranopterin phosphate + diphosphate. The protein operates within cofactor biosynthesis; molybdopterin biosynthesis. In terms of biological role, catalyzes the conversion of (8S)-3',8-cyclo-7,8-dihydroguanosine 5'-triphosphate to cyclic pyranopterin monophosphate (cPMP). The polypeptide is Cyclic pyranopterin monophosphate synthase (Bordetella avium (strain 197N)).